A 348-amino-acid chain; its full sequence is Sensor protein VraS (348 aa).

The next 2 membrane-spanning stretches (helical) occupy residues 13–33 (ILVYSMLIAFLFIDKVFVNII) and 43–63 (IFGIPVFLFLNLLIVLLCIIV). The 192-residue stretch at 150-341 (RLARELHDSV…RIEVKAPLNK (192 aa)) folds into the Histidine kinase domain.

It localises to the cell membrane. It carries out the reaction ATP + protein L-histidine = ADP + protein N-phospho-L-histidine.. In terms of biological role, member of the two-component regulatory system VraS/VraR involved in the control of the cell wall peptidoglycan biosynthesis. Probably activates VraR by phosphorylation. The chain is Sensor protein VraS (vraS) from Staphylococcus epidermidis (strain ATCC 35984 / DSM 28319 / BCRC 17069 / CCUG 31568 / BM 3577 / RP62A).